Reading from the N-terminus, the 1368-residue chain is DNA-directed RNA polymerase subunit beta (1368 aa).

It belongs to the RNA polymerase beta chain family. In terms of assembly, the RNAP catalytic core consists of 2 alpha, 1 beta, 1 beta' and 1 omega subunit. When a sigma factor is associated with the core the holoenzyme is formed, which can initiate transcription.

It carries out the reaction RNA(n) + a ribonucleoside 5'-triphosphate = RNA(n+1) + diphosphate. DNA-dependent RNA polymerase catalyzes the transcription of DNA into RNA using the four ribonucleoside triphosphates as substrates. This chain is DNA-directed RNA polymerase subunit beta, found in Ralstonia pickettii (strain 12J).